A 66-amino-acid chain; its full sequence is Conotoxin Cal5.2 (66 aa).

Positions 1 to 20 are cleaved as a signal peptide; it reads MMYCLPVVCILLLLIPSSAT. A propeptide spanning residues 21-51 is cleaved from the precursor; it reads FVVESRLEKDQAQSFTGDAWKRVSPIHEMIQ. Val65 is modified (valine amide).

It belongs to the conotoxin T superfamily. Contains 2 disulfide bonds that can be either 'C1-C3, C2-C4' or 'C1-C4, C2-C3', since these disulfide connectivities have been observed for conotoxins with cysteine framework V (for examples, see AC P0DQQ7 and AC P81755). In terms of tissue distribution, expressed by the venom duct.

It localises to the secreted. Probable neurotoxin with unknown target. Possibly targets ion channels. The chain is Conotoxin Cal5.2 from Californiconus californicus (California cone).